Here is a 485-residue protein sequence, read N- to C-terminus: MARALMFQGTGSDVGKSLLVAGLARAFADRGLKVRPFKPQNMSNNAAVTADGGEIGRAQALQARAARVPLSVHMNPVLLKPQSEVGAQVVVQGRVVGSAKAAAYQQMKAGLLPSVLESFRRLKTEADLVLVEGAGSASEVNLRANDIANMGFARAADVPVVLIGDIDRGGVIASLVGTKTVLDPADAAMIQGFIVNRFRGDPALFGSGMDLIAGHTGWAALGLVPFYTGAARLPAEDALGVAGPQAPKPGAKVRIAVPILPHVANFDDLDPLDAEPGLEVRRIRPSDVLPTDTDLVLLIGSKATIADLAALRAGGLHHDIQAFARRGGRVLGLCGGYQMMGEHLSDPDGVEGPPGSTEGLGLLKVGTVMTGEKRLVAVTGTSRLGAPFSGYEMHIGATEGADTARPFAELDGAGAEGAVSADGRIMGTYVHGLFGDDRQRAALMGLLGAGPAQVAYEAGVEEALDGLAAHLSAHLDLDRLLSLAR.

Residues 252–439 enclose the GATase cobBQ-type domain; sequence KVRIAVPILP…VHGLFGDDRQ (188 aa). Cysteine 334 (nucleophile) is an active-site residue. Histidine 431 is an active-site residue.

It belongs to the CobB/CobQ family. CobQ subfamily.

It participates in cofactor biosynthesis; adenosylcobalamin biosynthesis. Catalyzes amidations at positions B, D, E, and G on adenosylcobyrinic A,C-diamide. NH(2) groups are provided by glutamine, and one molecule of ATP is hydrogenolyzed for each amidation. The chain is Cobyric acid synthase from Azorhizobium caulinodans (strain ATCC 43989 / DSM 5975 / JCM 20966 / LMG 6465 / NBRC 14845 / NCIMB 13405 / ORS 571).